A 325-amino-acid polypeptide reads, in one-letter code: 5-dehydro-2-deoxygluconokinase (325 aa).

Belongs to the carbohydrate kinase PfkB family.

The catalysed reaction is 5-dehydro-2-deoxy-D-gluconate + ATP = 6-phospho-5-dehydro-2-deoxy-D-gluconate + ADP + H(+). It participates in polyol metabolism; myo-inositol degradation into acetyl-CoA; acetyl-CoA from myo-inositol: step 5/7. Its function is as follows. Catalyzes the phosphorylation of 5-dehydro-2-deoxy-D-gluconate (2-deoxy-5-keto-D-gluconate or DKG) to 6-phospho-5-dehydro-2-deoxy-D-gluconate (DKGP). The chain is 5-dehydro-2-deoxygluconokinase from Listeria monocytogenes serotype 4b (strain CLIP80459).